The sequence spans 453 residues: UDP-N-acetylmuramoylalanine--D-glutamate ligase (453 aa).

Residue 115–121 coordinates ATP; it reads GTNGKTT.

It belongs to the MurCDEF family.

It localises to the cytoplasm. The catalysed reaction is UDP-N-acetyl-alpha-D-muramoyl-L-alanine + D-glutamate + ATP = UDP-N-acetyl-alpha-D-muramoyl-L-alanyl-D-glutamate + ADP + phosphate + H(+). Its pathway is cell wall biogenesis; peptidoglycan biosynthesis. Its function is as follows. Cell wall formation. Catalyzes the addition of glutamate to the nucleotide precursor UDP-N-acetylmuramoyl-L-alanine (UMA). This Geotalea uraniireducens (strain Rf4) (Geobacter uraniireducens) protein is UDP-N-acetylmuramoylalanine--D-glutamate ligase.